The chain runs to 225 residues: Pre-mRNA-splicing factor SPF27 (225 aa).

Positions 138 to 222 (SNDNLALMIE…QGDENKENIR (85 aa)) form a coiled coil.

The protein belongs to the SPF27 family. In terms of assembly, component of the pre-catalytic and catalytic spliceosome complexes. Component of the postcatalytic spliceosome P complex.

Its subcellular location is the nucleus. Functionally, required for pre-mRNA splicing as component of the activated spliceosome. May have a scaffolding role in the spliceosome assembly as it contacts all other components of the core complex. The polypeptide is Pre-mRNA-splicing factor SPF27 (bcas2) (Danio rerio (Zebrafish)).